The sequence spans 490 residues: UDP-N-acetylmuramyl-tripeptide synthetase (490 aa).

113–119 is an ATP binding site; sequence GTDGKTT. UDP-N-acetyl-alpha-D-muramoyl-L-alanyl-D-glutamate contacts are provided by residues 158 to 159, serine 185, and arginine 193; that span reads TT. Lysine 225 is modified (N6-carboxylysine).

It belongs to the MurCDEF family. MurE subfamily. Carboxylation is probably crucial for Mg(2+) binding and, consequently, for the gamma-phosphate positioning of ATP.

The protein resides in the cytoplasm. It participates in cell wall biogenesis; peptidoglycan biosynthesis. In terms of biological role, catalyzes the addition of an amino acid to the nucleotide precursor UDP-N-acetylmuramoyl-L-alanyl-D-glutamate (UMAG) in the biosynthesis of bacterial cell-wall peptidoglycan. This chain is UDP-N-acetylmuramyl-tripeptide synthetase, found in Deinococcus radiodurans (strain ATCC 13939 / DSM 20539 / JCM 16871 / CCUG 27074 / LMG 4051 / NBRC 15346 / NCIMB 9279 / VKM B-1422 / R1).